A 620-amino-acid chain; its full sequence is Dihydroxy-acid dehydratase (620 aa).

Mg(2+) is bound at residue D81. C122 provides a ligand contact to [2Fe-2S] cluster. Mg(2+) contacts are provided by D123 and K124. The residue at position 124 (K124) is an N6-carboxylysine. [2Fe-2S] cluster is bound at residue C195. E491 is a Mg(2+) binding site. S517 (proton acceptor) is an active-site residue.

It belongs to the IlvD/Edd family. As to quaternary structure, homodimer. [2Fe-2S] cluster serves as cofactor. The cofactor is Mg(2+).

The enzyme catalyses (2R)-2,3-dihydroxy-3-methylbutanoate = 3-methyl-2-oxobutanoate + H2O. It carries out the reaction (2R,3R)-2,3-dihydroxy-3-methylpentanoate = (S)-3-methyl-2-oxopentanoate + H2O. It participates in amino-acid biosynthesis; L-isoleucine biosynthesis; L-isoleucine from 2-oxobutanoate: step 3/4. Its pathway is amino-acid biosynthesis; L-valine biosynthesis; L-valine from pyruvate: step 3/4. Functionally, functions in the biosynthesis of branched-chain amino acids. Catalyzes the dehydration of (2R,3R)-2,3-dihydroxy-3-methylpentanoate (2,3-dihydroxy-3-methylvalerate) into 2-oxo-3-methylpentanoate (2-oxo-3-methylvalerate) and of (2R)-2,3-dihydroxy-3-methylbutanoate (2,3-dihydroxyisovalerate) into 2-oxo-3-methylbutanoate (2-oxoisovalerate), the penultimate precursor to L-isoleucine and L-valine, respectively. This Colwellia psychrerythraea (strain 34H / ATCC BAA-681) (Vibrio psychroerythus) protein is Dihydroxy-acid dehydratase.